A 485-amino-acid chain; its full sequence is Noelin (485 aa).

A signal peptide spans Met1–Ala16. 8 N-linked (GlcNAc...) asparagine glycosylation sites follow: Asn33, Asn103, Asn187, Asn288, Asn307, Asn394, Asn431, and Asn473. A coiled-coil region spans residues Arg87–Cys227. An Olfactomedin-like domain is found at Ala226–His478. An intrachain disulfide couples Cys227 to Cys409. An Endoplasmic reticulum retention signal motif is present at residues Ser482–Leu485.

Homotetramer; disulfide-linked. Dimer of dimers, giving rise to a V-shaped homotretramer. Isoform 1 and isoform 3 interact with RTN4R. Identified in a complex with RTN4R and LINGO1. Peripherally associated with AMPAR complex. AMPAR complex consists of an inner core made of 4 pore-forming GluA/GRIA proteins (GRIA1, GRIA2, GRIA3 and GRIA4) and 4 major auxiliary subunits arranged in a twofold symmetry. One of the two pairs of distinct binding sites is occupied either by CNIH2, CNIH3 or CACNG2, CACNG3. The other harbors CACNG2, CACNG3, CACNG4, CACNG8 or GSG1L. This inner core of AMPAR complex is complemented by outer core constituents binding directly to the GluA/GRIA proteins at sites distinct from the interaction sites of the inner core constituents. Outer core constituents include at least PRRT1, PRRT2, CKAMP44/SHISA9, FRRS1L and NRN1. The proteins of the inner and outer core serve as a platform for other, more peripherally associated AMPAR constituents, including OLFM1. Alone or in combination, these auxiliary subunits control the gating and pharmacology of the AMPAR complex and profoundly impact their biogenesis and protein processing. Interacts with OLFM2. Interacts with DTNB. In terms of tissue distribution, expressed in the brain cortex, olfactory bulb and vomeronasal neuroepithelium (at protein level). Detected in brain cortex, hippocampus, dorsal root ganglion and olfactory bulb.

The protein localises to the secreted. Its subcellular location is the synapse. It localises to the endoplasmic reticulum. The protein resides in the cell projection. It is found in the axon. The protein localises to the perikaryon. Contributes to the regulation of axonal growth in the embryonic and adult central nervous system by inhibiting interactions between RTN4R and LINGO1. Inhibits RTN4R-mediated axon growth cone collapse. May play an important role in regulating the production of neural crest cells by the neural tube. May be required for normal responses to olfactory stimuli. This is Noelin (Olfm1) from Mus musculus (Mouse).